Consider the following 620-residue polypeptide: Glutathione-regulated potassium-efflux system protein KefC (620 aa).

12 helical membrane-spanning segments follow: residues 4–24 (HTLI…PIAV), 26–46 (LGLG…PWGL), 54–74 (SILH…GLEL), 90–110 (GALQ…LLGL), 114–134 (VAEL…MQAM), 149–169 (FAVL…IPLL), 178–198 (MGAF…VVLL), 218–238 (VFSA…EEVG), 270–290 (GLLL…GTLL), 294–314 (LRIV…LWLI), 327–347 (WFAV…GAAQ), and 359–379 (SLTL…VILN). The RCK N-terminal domain occupies 399–518 (QPRVIIAGFG…AGVEKPERET (120 aa)). The disordered stretch occupies residues 597-620 (GWQGTEEGKHTGNMADEPETKPSS).

It belongs to the monovalent cation:proton antiporter 2 (CPA2) transporter (TC 2.A.37) family. KefC subfamily. In terms of assembly, homodimer. Interacts with the regulatory subunit KefF.

Its subcellular location is the cell inner membrane. Functionally, pore-forming subunit of a potassium efflux system that confers protection against electrophiles. Catalyzes K(+)/H(+) antiport. The chain is Glutathione-regulated potassium-efflux system protein KefC from Escherichia coli O6:K15:H31 (strain 536 / UPEC).